A 226-amino-acid chain; its full sequence is V-type proton ATPase subunit E (226 aa).

It belongs to the V-ATPase E subunit family. As to quaternary structure, V-ATPase is a heteromultimeric enzyme made up of two complexes: the ATP-hydrolytic V1 complex and the proton translocation V0 complex. The V1 complex consists of three catalytic AB heterodimers that form a heterohexamer, three peripheral stalks each consisting of EG heterodimers, one central rotor including subunits D and F, and the regulatory subunits C and H. The proton translocation complex V0 consists of the proton transport subunit a, a ring of proteolipid subunits c9c'', rotary subunit d, subunits e and f, and the accessory subunits vah-19/Ac45 and vah-20/PRR. As to expression, expressed in the excretory cell and syncytial hypodermal cells (at protein level). Expressed in the intestine (at protein level).

Its subcellular location is the cytoplasm. The protein resides in the apical cell membrane. In terms of biological role, subunit of the V1 complex of vacuolar(H+)-ATPase (V-ATPase), a multisubunit enzyme composed of a peripheral complex (V1) that hydrolyzes ATP and a membrane integral complex (V0) that translocates protons. V-ATPase is responsible for acidifying and maintaining the pH of intracellular compartments and in some cell types, is targeted to the plasma membrane, where it is responsible for acidifying the extracellular environment. Regulates pH homeostasis in the intestine. Probably by regulating cytoplasmic pH, required for cell survival in the intestine and hypodermis. Involved in receptor-mediated endocytosis. Involved in embryogenesis and larval development. The protein is V-type proton ATPase subunit E of Caenorhabditis elegans.